The sequence spans 1134 residues: Protocadherin 18 (1134 aa).

A signal peptide spans 1–27; sequence MHQMNTKMHFRFALALLMAFFSHDVLA. Cadherin domains follow at residues 28-137, 138-246, 247-354, 361-465, 466-576, and 582-688; these read KNLK…SPQF, SRPV…SPAF, EQPS…KPEI, PGKE…PPRF, QRSR…VPVV, and HNNT…STAM. The Extracellular segment spans residues 28-699; that stretch reads KNLKYRIYEE…SVSRASLDVS (672 aa). A glycan (N-linked (GlcNAc...) asparagine) is linked at asparagine 103. N-linked (GlcNAc...) asparagine glycosylation is present at asparagine 269. Residue asparagine 559 is glycosylated (N-linked (GlcNAc...) asparagine). A helical membrane pass occupies residues 700–720; sequence MIIIISLGAICAVLLVIMVLF. Over 721–1134 the chain is Cytoplasmic; that stretch reads ATRCNREKKD…NKLLQDVRQS (414 aa). Disordered regions lie at residues 769–800, 868–888, 941–1004, and 1022–1083; these read LPIRSHHRSSPSSSPTLERGQMGSRQSHNSHQ, SLKDSGRGDSEAGDSDYDLGR, DYRS…SSLL, and FSEC…PSSK. Residues 791–800 are compositionally biased toward polar residues; the sequence is GSRQSHNSHQ. A compositionally biased stretch (basic and acidic residues) spans 868-877; the sequence is SLKDSGRGDS. Positions 892–1134 are interaction with DAB1; sequence IDRLLGEGFS…NKLLQDVRQS (243 aa). Positions 1027-1038 are enriched in basic and acidic residues; the sequence is EGDRSNSLERRK. Over residues 1059-1082 the composition is skewed to polar residues; that stretch reads THFQNPTSSSGTPLGTHSSVQPSS.

In terms of assembly, interacts with DAB1. Predominantly expressed in kidney and lung.

The protein resides in the cell membrane. Functionally, potential calcium-dependent cell-adhesion protein. The polypeptide is Protocadherin 18 (Pcdh18) (Mus musculus (Mouse)).